Reading from the N-terminus, the 66-residue chain is Jindongenin-1a (66 aa).

Positions 1–22 (MFTLKKPLLLLFFLGTVSLSLC) are cleaved as a signal peptide. Positions 23–40 (EQERAADDDEGEVIEEEV) are excised as a propeptide. A disulfide bond links Cys-60 and Cys-66.

As to expression, expressed by the skin glands.

Its subcellular location is the secreted. In terms of biological role, displays broad-spectrum antibacterial activity against a range of Gram-positive and Gram-negative bacteria. Also displays antifungal activity against C.albicans ATCC 2002. Has low hemolytic activity, low cytotoxicity and low antioxidant activity. The polypeptide is Jindongenin-1a (Amolops jingdongensis (Chinese torrent frog)).